Here is a 416-residue protein sequence, read N- to C-terminus: MEPSATPGAQPGVPTSSGEPFHLPPDYEDEFLRYLWRDYLYPKQYEWVLIAAYVAVFLIALVGNTLVCLAVWRNHHMRTVTNYFIVNLSLADVLVTAICLPASLLVDITESWLFGHALCKVIPYLQAVSVSVAVLTLSFIALDRWYAICHPLLFKSTARRARGSILGIWAVSLAVMVPQAAVMECSSVLPELANRTRLFSVCDERWADELYPKIYHSCFFFVTYLAPLGLMGMAYFQIFRKLWGPQIPGTTSALVRNWKRPSEQLEAQHQGLCTEPQPRARAFLAEVKQMRARRKTAKMLMVVLLVFALCYLPISVLNVLKRVFGMFRQASDREAVYACFTFSHWLVYANSAANPIIYNFLSGKFREQFKAAFSCCLPGLGPSSSARHKSLSLQSRCSVSKVSEHVVLTTVTTVLS.

The tract at residues 1-22 is disordered; the sequence is MEPSATPGAQPGVPTSSGEPFH. The Extracellular segment spans residues 1 to 46; that stretch reads MEPSATPGAQPGVPTSSGEPFHLPPDYEDEFLRYLWRDYLYPKQYE. The required for response to orexin-A stretch occupies residues 26 to 41; it reads DYEDEFLRYLWRDYLY. Residues 47–67 traverse the membrane as a helical segment; the sequence is WVLIAAYVAVFLIALVGNTLV. Residues 68 to 82 are Cytoplasmic-facing; it reads CLAVWRNHHMRTVTN. Residues 83–105 form a helical membrane-spanning segment; sequence YFIVNLSLADVLVTAICLPASLL. Residues 106-119 lie on the Extracellular side of the membrane; the sequence is VDITESWLFGHALC. A disulfide bond links Cys119 and Cys202. A helical membrane pass occupies residues 120-140; the sequence is KVIPYLQAVSVSVAVLTLSFI. The Cytoplasmic segment spans residues 141–160; the sequence is ALDRWYAICHPLLFKSTARR. A helical transmembrane segment spans residues 161 to 182; the sequence is ARGSILGIWAVSLAVMVPQAAV. The Extracellular portion of the chain corresponds to 183 to 213; that stretch reads MECSSVLPELANRTRLFSVCDERWADELYPK. Asn194 is a glycosylation site (N-linked (GlcNAc...) asparagine). The chain crosses the membrane as a helical span at residues 214-235; it reads IYHSCFFFVTYLAPLGLMGMAY. Residues 236-298 are Cytoplasmic-facing; the sequence is FQIFRKLWGP…QMRARRKTAK (63 aa). The chain crosses the membrane as a helical span at residues 299-321; sequence MLMVVLLVFALCYLPISVLNVLK. Over 322 to 336 the chain is Extracellular; the sequence is RVFGMFRQASDREAV. Residues 337–360 form a helical membrane-spanning segment; the sequence is YACFTFSHWLVYANSAANPIIYNF. Residues 361 to 416 lie on the Cytoplasmic side of the membrane; sequence LSGKFREQFKAAFSCCLPGLGPSSSARHKSLSLQSRCSVSKVSEHVVLTTVTTVLS.

The protein belongs to the G-protein coupled receptor 1 family. As to expression, highly expressed in the brain in the prefrontal cortex, hippocampus, paraventricular thalamus, ventromedial hypothalamus, arcuate nucleus, dorsal raphe nucleus, and locus coeruleus. Not detected in the spleen, lung, liver, skeletal muscle, kidney and testis. Orexin receptor mRNA expression has also been reported in the adrenal gland, enteric nervous system, and pancreas.

The protein localises to the cell membrane. Its function is as follows. Moderately selective excitatory receptor for orexin-A and, with a lower affinity, for orexin-B neuropeptide. Triggers an increase in cytoplasmic Ca(2+) levels in response to orexin-A binding. This is Orexin/Hypocretin receptor type 1 from Rattus norvegicus (Rat).